The sequence spans 928 residues: Kinesin heavy chain (928 aa).

Residues 7 to 330 (SIKVVARFRP…LRFGMRAKSI (324 aa)) form the Kinesin motor domain. ATP is bound by residues 88 to 95 (GQTGAGKS) and 238 to 245 (GSEKVGKT). The stretch at 343 to 866 (AELKQMLAKA…VKDRLEAAKA (524 aa)) forms a coiled coil. Residues 395-409 (SKSASTTARPSTPSR) show a composition bias toward low complexity. 2 disordered regions span residues 395-434 (SKSASTTARPSTPSRLLPESRAETPAISDRAGTPSLPLDK) and 893-928 (GGGDAVAGATATNPTIATLQQNPPENKRSSWFFQKS). Polar residues predominate over residues 905–928 (NPTIATLQQNPPENKRSSWFFQKS).

The protein belongs to the TRAFAC class myosin-kinesin ATPase superfamily. Kinesin family. Kinesin subfamily.

The protein resides in the cytoplasm. It localises to the cytoskeleton. In terms of biological role, kinesin is a microtubule-associated force-producing protein that may play a role in organelle transport. Its motor activity is directed toward the microtubule's plus end. In Neurospora crassa (strain ATCC 24698 / 74-OR23-1A / CBS 708.71 / DSM 1257 / FGSC 987), this protein is Kinesin heavy chain (kin).